Reading from the N-terminus, the 75-residue chain is Serine rich endogenous peptide 20 (75 aa).

Residues 1–25 (MYKLTLCILTLSFLLLSGLSNTVLA) form the signal peptide. An SCOOP motif motif is present at residues 52–66 (KIGASGSNSGRAPSC). The disordered stretch occupies residues 54–75 (GASGSNSGRAPSCNNSCKPNRP). Residues 56–58 (SGS) carry the SxS motif essential for MIK2 binding motif. The span at 56-75 (SGSNSGRAPSCNNSCKPNRP) shows a compositional bias: polar residues.

It belongs to the serine rich endogenous peptide (SCOOP) phytocytokine family. Interacts with MIK2 (via extracellular leucine-rich repeat domain); this interaction triggers the formation of complex between MIK2 and the BAK1/SERK3 and SERK4 coreceptors, and subsequent BAK1 activation by phosphorylation. Mostly expressed in roots.

The protein resides in the cell membrane. It localises to the secreted. The protein localises to the extracellular space. It is found in the apoplast. Functionally, brassicaceae-specific phytocytokine (plant endogenous peptide released into the apoplast) perceived by MIK2 in a BAK1/SERK3 and SERK4 coreceptors-dependent manner, that modulates various physiological and antimicrobial processes including growth prevention and reactive oxygen species (ROS) response regulation. Inhibits root growth. This Arabidopsis thaliana (Mouse-ear cress) protein is Serine rich endogenous peptide 20.